Here is a 249-residue protein sequence, read N- to C-terminus: 5'-nucleotidase SurE (249 aa).

A divalent metal cation-binding residues include aspartate 8, aspartate 9, serine 39, and asparagine 91.

This sequence belongs to the SurE nucleotidase family. The cofactor is a divalent metal cation.

The protein localises to the cytoplasm. It carries out the reaction a ribonucleoside 5'-phosphate + H2O = a ribonucleoside + phosphate. In terms of biological role, nucleotidase that shows phosphatase activity on nucleoside 5'-monophosphates. The chain is 5'-nucleotidase SurE from Pseudomonas putida (strain ATCC 47054 / DSM 6125 / CFBP 8728 / NCIMB 11950 / KT2440).